Consider the following 668-residue polypeptide: Major S-layer protein (668 aa).

The first 24 residues, 1 to 24 (MKRFAAVTLAALMLLTVFASAASA), serve as a signal peptide directing secretion. Residues N36, N65, N111, N265, N583, N596, N602, N608, N617, and N635 are each glycosylated (N-linked (GlcNAc...) asparagine). The disordered stretch occupies residues 584–650 (ETTSITKPDE…ESNGSPGFGV (67 aa)). Positions 596–611 (NETVSDNETMPDNTSS) are enriched in polar residues. Over residues 631–641 (EPTDNETEPDE) the composition is skewed to acidic residues. Residues 644 to 664 (GSPGFGVVLGLAGLLGVVYLV) traverse the membrane as a helical segment.

Belongs to the Methanosarcinales S-layer protein family. Post-translationally, glycosylated.

It is found in the secreted. Its subcellular location is the cell wall. The protein resides in the S-layer. It localises to the cell membrane. S-layer protein. The S-layer is a paracrystalline mono-layered assembly of proteins which coat the surface of the cell. The sequence is that of Major S-layer protein from Methanosarcina barkeri (strain Fusaro / DSM 804).